The sequence spans 166 residues: Small ribosomal subunit protein uS5 (166 aa).

One can recognise an S5 DRBM domain in the interval 11–74; that stretch reads LNEKLIAVNR…EKARRNMFTI (64 aa).

Belongs to the universal ribosomal protein uS5 family. Part of the 30S ribosomal subunit. Contacts proteins S4 and S8.

Its function is as follows. With S4 and S12 plays an important role in translational accuracy. Located at the back of the 30S subunit body where it stabilizes the conformation of the head with respect to the body. The sequence is that of Small ribosomal subunit protein uS5 from Aliivibrio fischeri (strain ATCC 700601 / ES114) (Vibrio fischeri).